A 255-amino-acid polypeptide reads, in one-letter code: Indole-3-glycerol phosphate synthase (255 aa).

It belongs to the TrpC family.

The enzyme catalyses 1-(2-carboxyphenylamino)-1-deoxy-D-ribulose 5-phosphate + H(+) = (1S,2R)-1-C-(indol-3-yl)glycerol 3-phosphate + CO2 + H2O. The protein operates within amino-acid biosynthesis; L-tryptophan biosynthesis; L-tryptophan from chorismate: step 4/5. The chain is Indole-3-glycerol phosphate synthase from Streptococcus thermophilus (strain CNRZ 1066).